A 75-amino-acid chain; its full sequence is Small capsomere-interacting protein (75 aa).

This sequence belongs to the herpesviridae small capsomere-interacting protein family. In terms of assembly, interacts with the major capsid protein/MCP.

The protein resides in the virion. It localises to the host nucleus. Participates in the assembly of the infectious particles by decorating the outer surface of the capsid shell and thus forming a layer between the capsid and the tegument. Complexes composed of the capsid protein VP5 and UL48A assemble together in the host cytoplasm and are translocated to the nucleus, where they accumulate and participate in capsid assembly. Its function is as follows. Participates in the assembly of the infectious particles by decorating the outer surface of the capsid shell and thus forming a layer between the capsid and the tegument. Complexes composed of the major capsid protein and small capsomere-interacting protein/SCP assemble together in the host cytoplasm and are translocated to the nucleus, where they accumulate and participate in capsid assembly. The sequence is that of Small capsomere-interacting protein from Homo sapiens (Human).